The chain runs to 443 residues: Oxygen-dependent coproporphyrinogen-III oxidase, mitochondrial (443 aa).

The N-terminal 98 residues, 1–98 (MALRLGRLGS…EMVPKSSGAR (98 aa)), are a transit peptide targeting the mitochondrion. Residues 89–112 (EMVPKSSGARSPSPGRREEDGDEL) form a disordered region. Ser-101 carries the phosphoserine modification. Over residues 103 to 112 (GRREEDGDEL) the composition is skewed to basic and acidic residues. Residues 182-191 (VLQDGRVFEK) form an important for dimerization region. Residue Ser-233 participates in coproporphyrinogen III binding. His-247 functions as the Proton donor in the catalytic mechanism. 249–251 (NYR) serves as a coordination point for coproporphyrinogen III. Residues 381–417 (YVEFNLLYDRGTKFGLFTPGSRIESILMSLPLTARWE) are important for dimerization. Residue Lys-393 is modified to N6-acetyllysine; alternate. At Lys-393 the chain carries N6-succinyllysine; alternate. 400–402 (GSR) contributes to the coproporphyrinogen III binding site.

Belongs to the aerobic coproporphyrinogen-III oxidase family. Homodimer. Expressed in erythroid cells. Expressed in liver.

It is found in the mitochondrion intermembrane space. The enzyme catalyses coproporphyrinogen III + O2 + 2 H(+) = protoporphyrinogen IX + 2 CO2 + 2 H2O. Its pathway is porphyrin-containing compound metabolism; protoporphyrin-IX biosynthesis; protoporphyrinogen-IX from coproporphyrinogen-III (O2 route): step 1/1. Its function is as follows. Involved in the heme biosynthesis. Catalyzes the aerobic oxidative decarboxylation of propionate groups of rings A and B of coproporphyrinogen-III to yield the vinyl groups in protoporphyrinogen-IX. The chain is Oxygen-dependent coproporphyrinogen-III oxidase, mitochondrial (Cpox) from Mus musculus (Mouse).